The following is a 298-amino-acid chain: MFKENTVKLGIAPIAWTNDDMPELGAGNTFEQCISEMALAGFNGSEVGNKYPRNTVVLKKSLALRNLEIASAWFSTFLTTKPLEETVEEFIKHRDFLHDMGAKVIVVSEQGHSIQGLMDVPLFKNKPVFTEEEWNKLADGLHHLGKLAQEKGLHIVYHHHMGTGVQTTAEIEKLMDMTNPALVSLLFDTGHLVFSGEEPLYILKKYLPRIKHVHLKDIRQEVVDTVKENELSFLQAVKNGAFTVPGDGVIGFDEVFTILANSDYQGWFVVEAEQDPALANPFEYALKARKFIQEKAGL.

Belongs to the IolE/MocC family. It depends on glutathione as a cofactor. Co(2+) is required as a cofactor. Mn(2+) serves as cofactor.

The enzyme catalyses scyllo-inosose = 3D-3,5/4-trihydroxycyclohexane-1,2-dione + H2O. It functions in the pathway polyol metabolism; myo-inositol degradation into acetyl-CoA; acetyl-CoA from myo-inositol: step 2/7. Its function is as follows. Catalyzes the dehydration of inosose (2-keto-myo-inositol, 2KMI or 2,4,6/3,5-pentahydroxycyclohexanone) to 3D-(3,5/4)-trihydroxycyclohexane-1,2-dione (D-2,3-diketo-4-deoxy-epi-inositol). This chain is Inosose dehydratase 1, found in Bacillus cereus (strain ZK / E33L).